The primary structure comprises 445 residues: GRAM domain-containing protein 2B (445 aa).

Met1 is modified (N-acetylmethionine). Residues 1–118 (MVKKRLSSSD…ERKKSSSSSQ (118 aa)) are disordered. Composition is skewed to polar residues over residues 18–44 (PSNS…SSEA) and 56–68 (KSPT…SSVE). Low complexity predominate over residues 82 to 93 (SKSSFDGSSLLS). The span at 94-112 (DKNDCKTESKTDSKTERKK) shows a compositional bias: basic and acidic residues. The 68-residue stretch at 123–190 (MHFHKLFLDV…FSVTLIKKTK (68 aa)) folds into the GRAM domain. Residues 233 to 246 (TSVGNSPNPSSAEN) show a composition bias toward polar residues. Positions 233–252 (TSVGNSPNPSSAENSFRADR) are disordered. Phosphoserine is present on residues Ser238, Ser255, and Ser265. The segment at 277-331 (DLEGYSSSGSQTPESENSRDFHVTESQTVLNVTKGETKPPRTDAHGSRAPDGKAK) is disordered. Over residues 281–291 (YSSSGSQTPES) the composition is skewed to polar residues. Residues 311–330 (GETKPPRTDAHGSRAPDGKA) are compositionally biased toward basic and acidic residues.

The chain is GRAM domain-containing protein 2B (Gramd2b) from Mus musculus (Mouse).